The following is a 106-amino-acid chain: L-rhamnose mutarotase (106 aa).

Substrate is bound at residue tyrosine 20. Histidine 24 (proton donor) is an active-site residue. Substrate contacts are provided by residues tyrosine 43 and 78-79 (WW).

It belongs to the rhamnose mutarotase family. As to quaternary structure, homodimer.

It is found in the cytoplasm. It carries out the reaction alpha-L-rhamnose = beta-L-rhamnose. It participates in carbohydrate degradation; L-rhamnose degradation. In terms of biological role, involved in the anomeric conversion of L-rhamnose. The polypeptide is L-rhamnose mutarotase (rhaM) (Rhizobium leguminosarum bv. trifolii).